The chain runs to 426 residues: Serine--tRNA ligase (426 aa).

235–237 provides a ligand contact to L-serine; sequence TAE. Residues 266–268 and valine 282 each bind ATP; that span reads RRE. Glutamate 289 lines the L-serine pocket. 353-356 contributes to the ATP binding site; it reads EASS. Serine 389 provides a ligand contact to L-serine.

It belongs to the class-II aminoacyl-tRNA synthetase family. Type-1 seryl-tRNA synthetase subfamily. As to quaternary structure, homodimer. The tRNA molecule binds across the dimer.

Its subcellular location is the cytoplasm. The catalysed reaction is tRNA(Ser) + L-serine + ATP = L-seryl-tRNA(Ser) + AMP + diphosphate + H(+). It carries out the reaction tRNA(Sec) + L-serine + ATP = L-seryl-tRNA(Sec) + AMP + diphosphate + H(+). The protein operates within aminoacyl-tRNA biosynthesis; selenocysteinyl-tRNA(Sec) biosynthesis; L-seryl-tRNA(Sec) from L-serine and tRNA(Sec): step 1/1. Functionally, catalyzes the attachment of serine to tRNA(Ser). Is also able to aminoacylate tRNA(Sec) with serine, to form the misacylated tRNA L-seryl-tRNA(Sec), which will be further converted into selenocysteinyl-tRNA(Sec). This is Serine--tRNA ligase from Chlorobium chlorochromatii (strain CaD3).